The sequence spans 264 residues: NADH dehydrogenase [ubiquinone] iron-sulfur protein 3, mitochondrial (264 aa).

The transit peptide at 1–36 directs the protein to the mitochondrion; that stretch reads MAAAAVARLWWRGILGASALTRGTGRPSVLLLPVRR.

This sequence belongs to the complex I 30 kDa subunit family. In terms of assembly, core subunit of respiratory chain NADH dehydrogenase (Complex I) which is composed of 45 different subunits. Interacts with NDUFAF3. Interacts with RAB5IF. Found in subcomplexes containing subunits NDUFS2, MT-ND1 and NDUFA13.

Its subcellular location is the mitochondrion inner membrane. The enzyme catalyses a ubiquinone + NADH + 5 H(+)(in) = a ubiquinol + NAD(+) + 4 H(+)(out). Core subunit of the mitochondrial membrane respiratory chain NADH dehydrogenase (Complex I) which catalyzes electron transfer from NADH through the respiratory chain, using ubiquinone as an electron acceptor. Essential for the catalytic activity and assembly of complex I. The sequence is that of NADH dehydrogenase [ubiquinone] iron-sulfur protein 3, mitochondrial (NDUFS3) from Pan troglodytes (Chimpanzee).